A 279-amino-acid polypeptide reads, in one-letter code: S-methyl-5'-thioadenosine phosphorylase (279 aa).

Residues Ser-13, 55-56 (RH), and 88-89 (TA) contribute to the phosphate site. Met-191 provides a ligand contact to substrate. Thr-192 serves as a coordination point for phosphate. Position 215–217 (215–217 (DYD)) interacts with substrate.

This sequence belongs to the PNP/MTAP phosphorylase family. MTAP subfamily. In terms of assembly, homotrimer.

Its subcellular location is the cytoplasm. It localises to the nucleus. The catalysed reaction is S-methyl-5'-thioadenosine + phosphate = 5-(methylsulfanyl)-alpha-D-ribose 1-phosphate + adenine. The protein operates within amino-acid biosynthesis; L-methionine biosynthesis via salvage pathway; S-methyl-5-thio-alpha-D-ribose 1-phosphate from S-methyl-5'-thioadenosine (phosphorylase route): step 1/1. In terms of biological role, catalyzes the reversible phosphorylation of S-methyl-5'-thioadenosine (MTA) to adenine and 5-methylthioribose-1-phosphate. Involved in the breakdown of MTA, a major by-product of polyamine biosynthesis. Responsible for the first step in the methionine salvage pathway after MTA has been generated from S-adenosylmethionine. Has broad substrate specificity with 6-aminopurine nucleosides as preferred substrates. In Aedes aegypti (Yellowfever mosquito), this protein is S-methyl-5'-thioadenosine phosphorylase.